Here is a 188-residue protein sequence, read N- to C-terminus: Small ribosomal subunit protein uS7 (188 aa).

The protein belongs to the universal ribosomal protein uS7 family. In terms of assembly, part of the 30S ribosomal subunit.

Functionally, one of the primary rRNA binding proteins, it binds directly to 16S rRNA where it nucleates assembly of the head domain of the 30S subunit. Is located at the subunit interface close to the decoding center. The sequence is that of Small ribosomal subunit protein uS7 from Methanococcus maripaludis (strain C6 / ATCC BAA-1332).